We begin with the raw amino-acid sequence, 195 residues long: Guanylate kinase (195 aa).

The 179-residue stretch at 5–183 folds into the Guanylate kinase-like domain; that stretch reads GILFVISGPS…ALQKITAIII (179 aa). 12-19 is a binding site for ATP; it reads GPSGVGKG.

The protein belongs to the guanylate kinase family.

The protein localises to the cytoplasm. It catalyses the reaction GMP + ATP = GDP + ADP. Functionally, essential for recycling GMP and indirectly, cGMP. This is Guanylate kinase from Syntrophomonas wolfei subsp. wolfei (strain DSM 2245B / Goettingen).